Here is a 427-residue protein sequence, read N- to C-terminus: Adenylosuccinate synthetase (427 aa).

GTP contacts are provided by residues 12-18 and 40-42; these read GDEGKGK and GHT. Catalysis depends on D13, which acts as the Proton acceptor. Mg(2+) contacts are provided by D13 and G40. Residues 13–16, 38–41, T130, R144, Q224, T239, and R303 contribute to the IMP site; these read DEGK and NAGH. The Proton donor role is filled by H41. 299–305 provides a ligand contact to substrate; it reads VTTGRAR. GTP is bound by residues R305, 331 to 333, and 413 to 415; these read KID and SVG.

Belongs to the adenylosuccinate synthetase family. As to quaternary structure, homodimer. Mg(2+) serves as cofactor.

The protein resides in the cytoplasm. It carries out the reaction IMP + L-aspartate + GTP = N(6)-(1,2-dicarboxyethyl)-AMP + GDP + phosphate + 2 H(+). It participates in purine metabolism; AMP biosynthesis via de novo pathway; AMP from IMP: step 1/2. Plays an important role in the de novo pathway of purine nucleotide biosynthesis. Catalyzes the first committed step in the biosynthesis of AMP from IMP. The protein is Adenylosuccinate synthetase of Clostridium novyi (strain NT).